The sequence spans 468 residues: Secreted triacylglycerol lipase LIP7 (468 aa).

An N-terminal signal peptide occupies residues 1-21 (MFPRQILVFAALGLCFALVAG). C125 and C295 are oxidised to a cystine. S209 serves as the catalytic Nucleophile. Catalysis depends on residues D355 and H389.

Belongs to the AB hydrolase superfamily. Lipase family. Class Lip subfamily.

Its subcellular location is the secreted. It is found in the cell wall. It carries out the reaction a triacylglycerol + H2O = a diacylglycerol + a fatty acid + H(+). The catalysed reaction is a monoacylglycerol + H2O = glycerol + a fatty acid + H(+). The enzyme catalyses a diacylglycerol + H2O = a monoacylglycerol + a fatty acid + H(+). In terms of biological role, secreted lipase involved in Dandruff and seborrheic dermatitis (D/SD) probably via lipase-mediated breakdown of sebaceous lipids and release of irritating free fatty acids. Has triacylglycerol lipase activity and is able to hydrolyze triolein. Mostly converts monoolein to di- and triolein, while free fatty acids are only produced in low amounts. In Malassezia globosa (strain ATCC MYA-4612 / CBS 7966) (Dandruff-associated fungus), this protein is Secreted triacylglycerol lipase LIP7.